Reading from the N-terminus, the 177-residue chain is Acetyltransferase (177 aa).

The region spanning 4–174 (AQLRRVTAES…PTAIYFKTLG (171 aa)) is the N-acetyltransferase domain. Acetyl-CoA contacts are provided by residues glutamate 27, 96-98 (LMV), 104-109 (GRGLGR), 130-131 (DT), and tyrosine 141.

In terms of biological role, renders tabtoxin-producing pathogens tolerant to their own phytotoxins. The polypeptide is Acetyltransferase (ttr) (Pseudomonas amygdali pv. tabaci (Pseudomonas syringae pv. tabaci)).